The chain runs to 300 residues: Actin-related protein 2/3 complex subunit 2 (300 aa).

2 positions are modified to N6-acetyllysine: K275 and K295.

It belongs to the ARPC2 family. In terms of assembly, component of the Arp2/3 complex composed of ACTR2/ARP2, ACTR3/ARP3, ARPC1B/p41-ARC, ARPC2/p34-ARC, ARPC3/p21-ARC, ARPC4/p20-ARC and ARPC5/p16-ARC. Interacts with SHANK3; the interaction probably mediates the association of SHANK3 with the Arp2/3 complex.

Its subcellular location is the cytoplasm. It is found in the cytoskeleton. It localises to the cell projection. The protein localises to the synapse. The protein resides in the synaptosome. Its subcellular location is the nucleus. Functionally, actin-binding component of the Arp2/3 complex, a multiprotein complex that mediates actin polymerization upon stimulation by nucleation-promoting factor (NPF). The Arp2/3 complex mediates the formation of branched actin networks in the cytoplasm, providing the force for cell motility. Seems to contact the mother actin filament. In addition to its role in the cytoplasmic cytoskeleton, the Arp2/3 complex also promotes actin polymerization in the nucleus, thereby regulating gene transcription and repair of damaged DNA. The Arp2/3 complex promotes homologous recombination (HR) repair in response to DNA damage by promoting nuclear actin polymerization, leading to drive motility of double-strand breaks (DSBs). This chain is Actin-related protein 2/3 complex subunit 2, found in Rattus norvegicus (Rat).